A 297-amino-acid chain; its full sequence is Ezy-1 protein (297 aa).

3 disordered regions span residues 1 to 34, 115 to 151, and 255 to 297; these read MAAV…GDGG, FTGK…SSSS, and QPAG…SPNM. Residues 123–135 show a composition bias toward acidic residues; sequence AEGDDGEDEEEGE. Low complexity predominate over residues 136–150; that stretch reads AQGVGKDAVDSSSSS. The span at 259-269 shows a compositional bias: basic and acidic residues; that stretch reads DGHEPEPKRPE.

The chain is Ezy-1 protein (Ezy-1) from Chlamydomonas reinhardtii (Chlamydomonas smithii).